A 312-amino-acid chain; its full sequence is Serine/threonine-protein phosphatase PP2A catalytic subunit (312 aa).

Mn(2+) contacts are provided by aspartate 60, histidine 62, aspartate 88, and asparagine 120. Histidine 121 functions as the Proton donor in the catalytic mechanism. Mn(2+)-binding residues include histidine 170 and histidine 244.

Belongs to the PPP phosphatase family. PP-2A subfamily. Requires Mn(2+) as cofactor.

The protein resides in the cytoplasm. The enzyme catalyses O-phospho-L-seryl-[protein] + H2O = L-seryl-[protein] + phosphate. The catalysed reaction is O-phospho-L-threonyl-[protein] + H2O = L-threonyl-[protein] + phosphate. This is Serine/threonine-protein phosphatase PP2A catalytic subunit from Nicotiana tabacum (Common tobacco).